The following is a 259-amino-acid chain: Protein unc-50 homolog (259 aa).

M1 carries the N-acetylmethionine modification. Over residues 1-17 (MLPSTSVNSPAQGNGVL) the composition is skewed to polar residues. A disordered region spans residues 1–22 (MLPSTSVNSPAQGNGVLSSRDA). Residues 1-82 (MLPSTSVNSP…TKDQWARDDP (82 aa)) lie on the Cytoplasmic side of the membrane. S6 carries the phosphoserine modification. Residues 83-103 (AFLVLLSIWLCVSTIGFGFVL) traverse the membrane as a helical segment. The Lumenal segment spans residues 104 to 115 (DMGFFETIKLLL). A helical transmembrane segment spans residues 116–136 (WVVFIDCVGVGLLISTLMWFI). Topologically, residues 137–163 (SNKYLVKRQSRDYDVEWGYAFDVHLNA) are cytoplasmic. A helical membrane pass occupies residues 164–184 (FYPLLVILHFIQLFFINHVIL). Over 185-187 (TDT) the chain is Lumenal. A helical membrane pass occupies residues 188–208 (FIGYLVGNTLWLVAVGYYIYV). The Cytoplasmic segment spans residues 209 to 222 (TFLGYSALPFLKNT). The helical transmembrane segment at 223-243 (VILLYPFAPLILLYGLSLALG) threads the bilayer. Topologically, residues 244–259 (WNFTHTLCSFYKYRVK) are lumenal.

The protein belongs to the unc-50 family.

The protein resides in the nucleus inner membrane. Its subcellular location is the golgi apparatus membrane. Involved in the cell surface expression of neuronal nicotinic receptors. Binds RNA. In Bos taurus (Bovine), this protein is Protein unc-50 homolog (UNC50).